Consider the following 426-residue polypeptide: Dihydroorotase (426 aa).

Zn(2+) contacts are provided by H62 and H64. Substrate is bound by residues 64-66 and N96; that span reads HLR. Zn(2+) is bound by residues D154, H181, H234, and D307. The active site involves D307. H311 lines the substrate pocket.

This sequence belongs to the metallo-dependent hydrolases superfamily. DHOase family. Class I DHOase subfamily. Requires Zn(2+) as cofactor.

The catalysed reaction is (S)-dihydroorotate + H2O = N-carbamoyl-L-aspartate + H(+). It functions in the pathway pyrimidine metabolism; UMP biosynthesis via de novo pathway; (S)-dihydroorotate from bicarbonate: step 3/3. Its function is as follows. Catalyzes the reversible cyclization of carbamoyl aspartate to dihydroorotate. This chain is Dihydroorotase, found in Syntrophus aciditrophicus (strain SB).